We begin with the raw amino-acid sequence, 245 residues long: 4-hydroxy-tetrahydrodipicolinate reductase (245 aa).

NAD(+) is bound by residues 7 to 12, 75 to 77, and 102 to 105; these read GAKGKV, GTT, and APNF. Histidine 132 serves as the catalytic Proton donor/acceptor. Histidine 133 is a (S)-2,3,4,5-tetrahydrodipicolinate binding site. Lysine 136 functions as the Proton donor in the catalytic mechanism. Residue 142–143 coordinates (S)-2,3,4,5-tetrahydrodipicolinate; sequence GT.

It belongs to the DapB family.

Its subcellular location is the cytoplasm. It carries out the reaction (S)-2,3,4,5-tetrahydrodipicolinate + NAD(+) + H2O = (2S,4S)-4-hydroxy-2,3,4,5-tetrahydrodipicolinate + NADH + H(+). It catalyses the reaction (S)-2,3,4,5-tetrahydrodipicolinate + NADP(+) + H2O = (2S,4S)-4-hydroxy-2,3,4,5-tetrahydrodipicolinate + NADPH + H(+). The protein operates within amino-acid biosynthesis; L-lysine biosynthesis via DAP pathway; (S)-tetrahydrodipicolinate from L-aspartate: step 4/4. In terms of biological role, catalyzes the conversion of 4-hydroxy-tetrahydrodipicolinate (HTPA) to tetrahydrodipicolinate. The chain is 4-hydroxy-tetrahydrodipicolinate reductase from Mycobacterium sp. (strain JLS).